We begin with the raw amino-acid sequence, 146 residues long: UPF0178 protein Lin1493 (146 aa).

This sequence belongs to the UPF0178 family.

The chain is UPF0178 protein Lin1493 from Listeria innocua serovar 6a (strain ATCC BAA-680 / CLIP 11262).